Here is a 193-residue protein sequence, read N- to C-terminus: Early light-induced protein 2, chloroplastic (193 aa).

A chloroplast-targeting transit peptide spans 1-43; it reads MATASFNMQSVFAAPSGVLTTRNIRNTNQLFFKRIAPVGVRCM. The disordered stretch occupies residues 46–80; that stretch reads GDPIKEDPSVPSTSTSATPPQMPQSPPPPVSKPKV. Low complexity predominate over residues 54–64; it reads SVPSTSTSATP. The segment covering 65–76 has biased composition (pro residues); sequence PQMPQSPPPPVS. Transmembrane regions (helical) follow at residues 102–122, 129–149, and 173–193; these read LAMVGFVAAIAMELSKGENVF, GVGWFLGTTALLTLASMVPLF, and FAMLGLVALAFTEYVTGGTLV.

This sequence belongs to the ELIP/psbS family.

The protein resides in the plastid. The protein localises to the chloroplast thylakoid membrane. In terms of biological role, probably involved in the integration of pigments into the mature light-harvesting pigment-protein complexes. Light-harvesting chlorophyll (LHC) a/b-binding protein required to ensure a high rate of chlorophyll accumulation during deetiolation in continuous high light. Involved in seed germination. May fulfill a photoprotective functions. Prevents excess accumulation of free chlorophyll by inhibiting the entire chlorophyll biosynthesis pathway (e.g. 5-aminolevulinate synthesis and Mg-protoporphyrin IX chelatase activity), and hence prevent photooxidative stress. This Arabidopsis thaliana (Mouse-ear cress) protein is Early light-induced protein 2, chloroplastic.